The chain runs to 946 residues: Villin-4 (946 aa).

4 Gelsolin-like repeats span residues 28–109, 152–219, 274–339, and 641–715; these read NFKP…ETEK, VHVK…EDGK, LEHE…TIMF, and EIHH…PQFF. Disordered regions lie at residues 744 to 789, 801 to 832, and 844 to 902; these read ATPS…GRSP, PSTR…SSKQ, and GPTK…PAPD. The segment covering 765–777 has biased composition (polar residues); the sequence is QDKSQQRTRSMSH. Residues 874-883 show a composition bias toward acidic residues; that stretch reads SENEPEDDEN. One can recognise an HP domain in the interval 881 to 946; that stretch reads DENSTIYPYE…NRLKSDLQLF (66 aa).

This sequence belongs to the villin/gelsolin family.

The protein localises to the cytoplasm. The protein resides in the cytoskeleton. Its function is as follows. Ca(2+)-regulated actin-binding protein. Binds actin microfilaments (MFs). Involved in actin filament bundling, severing and capping. Caps the barbed end of actin filaments and is able to sever them in a calcium-dependent manner. In Oryza sativa subsp. japonica (Rice), this protein is Villin-4.